The chain runs to 156 residues: Phosphopantetheine adenylyltransferase (156 aa).

T9 contributes to the substrate binding site. ATP is bound by residues 9–10 (TF) and H17. 3 residues coordinate substrate: K41, L73, and R87. ATP-binding positions include 88–90 (GVR), E98, and 123–129 (WAFVSST).

This sequence belongs to the bacterial CoaD family. In terms of assembly, homohexamer. Requires Mg(2+) as cofactor.

It is found in the cytoplasm. It carries out the reaction (R)-4'-phosphopantetheine + ATP + H(+) = 3'-dephospho-CoA + diphosphate. It participates in cofactor biosynthesis; coenzyme A biosynthesis; CoA from (R)-pantothenate: step 4/5. Its function is as follows. Reversibly transfers an adenylyl group from ATP to 4'-phosphopantetheine, yielding dephospho-CoA (dPCoA) and pyrophosphate. The protein is Phosphopantetheine adenylyltransferase of Haemophilus influenzae (strain ATCC 51907 / DSM 11121 / KW20 / Rd).